Consider the following 392-residue polypeptide: N-acyl-phosphatidylethanolamine-hydrolyzing phospholipase D (392 aa).

Met-1 carries the post-translational modification N-acetylmethionine. Over residues 1–16 the composition is skewed to polar residues; the sequence is MDENETNQLLMTSNQY. The disordered stretch occupies residues 1–39; it reads MDENETNQLLMTSNQYPKEAVRKRQNSRNSGGSDSSRFS. Low complexity predominate over residues 27-36; that stretch reads SRNSGGSDSS. Zn(2+)-binding residues include His-183 and His-185. Tyr-186 is an an N-acyl-1,2-diacyl-sn-glycero-3-phosphoethanolamine binding site. Zn(2+)-binding residues include Asp-187, His-188, and His-251. Deoxycholate-binding residues include Lys-254 and Met-258. A Zn(2+)-binding site is contributed by Asp-282. Residue His-319 participates in an N-acyl-1,2-diacyl-sn-glycero-3-phosphoethanolamine binding. His-341 is a Zn(2+) binding site. Ala-346 is a deoxycholate binding site.

Belongs to the NAPE-PLD family. As to quaternary structure, homodimer. Bile acids promote the assembly of inactive monomers into an active dimer and enable catalysis. The cofactor is Zn(2+). In terms of tissue distribution, widely expressed. Highest expression in brain, kidney and testis (at protein level). Expressed in adipose tissue (at protein level).

It localises to the golgi apparatus membrane. The protein resides in the early endosome membrane. It is found in the nucleus envelope. Its subcellular location is the nucleus. The protein localises to the nucleoplasm. The catalysed reaction is an N-acyl-1,2-diacyl-sn-glycero-3-phosphoethanolamine + H2O = an N-acylethanolamine + a 1,2-diacyl-sn-glycero-3-phosphate + H(+). The enzyme catalyses N-butanoyl-1-hexadecanoyl-2-(9Z,12Z-octadecadienoyl)-sn-glycero-3-phosphoethanolamine + H2O = N-butanoyl ethanolamine + 1-hexadecanoyl-2-(9Z,12Z-octadecadienoyl)-sn-glycero-3-phosphate + H(+). It catalyses the reaction N-hexanoyl-1-hexadecanoyl-2-(9Z,12Z-octadecadienoyl)-sn-glycero-3-phosphoethanolamine + H2O = N-hexanoyl ethanolamine + 1-hexadecanoyl-2-(9Z,12Z-octadecadienoyl)-sn-glycero-3-phosphate + H(+). It carries out the reaction N-octanoyl-1-hexadecanoyl-2-(9Z,12Z-octadecadienoyl)-sn-glycero-3-phosphoethanolamine + H2O = N-octanoyl ethanolamine + 1-hexadecanoyl-2-(9Z,12Z-octadecadienoyl)-sn-glycero-3-phosphate + H(+). The catalysed reaction is N-decanoyl-1-hexadecanoyl-2-(9Z,12Z-octadecadienoyl)-sn-glycero-3-phosphoethanolamine + H2O = N-decanoyl ethanolamine + 1-hexadecanoyl-2-(9Z,12Z-octadecadienoyl)-sn-glycero-3-phosphate + H(+). The enzyme catalyses N-dodecanoyl-1,2-di-(9Z-octadecenoyl)-sn-glycero-3-phosphoethanolamine + H2O = N-dodecanoylethanolamine + 1,2-di-(9Z-octadecenoyl)-sn-glycero-3-phosphate + H(+). It catalyses the reaction N-tetradecanoyl-1,2-di-(9Z-octadecenoyl)-sn-glycero-3-phosphoethanolamine + H2O = N-tetradecanoylethanolamine + 1,2-di-(9Z-octadecenoyl)-sn-glycero-3-phosphate + H(+). It carries out the reaction N-hexadecanoyl-1,2-di-(9Z-octadecenoyl)-sn-glycero-3-phosphoethanolamine + H2O = N-hexadecanoylethanolamine + 1,2-di-(9Z-octadecenoyl)-sn-glycero-3-phosphate + H(+). The catalysed reaction is N,1-dihexadecanoyl-2-(9Z,12Z-octadecadienoyl)-sn-glycero-3-phosphoethanolamine + H2O = 1-hexadecanoyl-2-(9Z,12Z-octadecadienoyl)-sn-glycero-3-phosphate + N-hexadecanoylethanolamine + H(+). The enzyme catalyses N-octadecanoyl-1,2-di-(9Z-octadecenoyl)-sn-glycero-3-phosphoethanolamine + H2O = N-octadecanoyl ethanolamine + 1,2-di-(9Z-octadecenoyl)-sn-glycero-3-phosphate + H(+). It catalyses the reaction N,1,2-tri-(9Z-octadecenoyl)-sn-glycero-3-phosphoethanolamine + H2O = N-(9Z-octadecenoyl) ethanolamine + 1,2-di-(9Z-octadecenoyl)-sn-glycero-3-phosphate + H(+). It carries out the reaction N-(5Z,8Z,11Z,14Z-eicosatetraenoyl)-1,2-diacyl-sn-glycero-3-phosphoethanolamine + H2O = N-(5Z,8Z,11Z,14Z-eicosatetraenoyl)-ethanolamine + a 1,2-diacyl-sn-glycero-3-phosphate + H(+). The catalysed reaction is N-(5Z,8Z,11Z,14Z-eicosatetraenoyl)-1,2-di-(9Z-octadecenoyl)-sn-glycero-3-phosphoethanolamine + H2O = N-(5Z,8Z,11Z,14Z-eicosatetraenoyl)-ethanolamine + 1,2-di-(9Z-octadecenoyl)-sn-glycero-3-phosphate + H(+). The enzyme catalyses 1-O-(1Z-octadecenoyl)-2-(9Z-octadecenoyl)-sn-glycero-3-phospho-N-hexadecanoyl-ethanolamine + H2O = 1-O-(1Z-octadecenoyl)-2-(9Z-octadecenoyl)-sn-glycero-3-phosphate + N-hexadecanoylethanolamine + H(+). It catalyses the reaction N,1-diacyl-sn-glycero-3-phosphoethanolamine + H2O = an N-acylethanolamine + a 1-acyl-sn-glycero-3-phosphate + H(+). It carries out the reaction N,1-dihexadecanoyl-sn-glycero-3-phosphoethanolamine + H2O = N-hexadecanoylethanolamine + 1-hexadecanoyl-sn-glycero-3-phosphate + H(+). The catalysed reaction is N-(5Z,8Z,11Z,14Z-eicosatetraenoyl)-1-(9Z-octadecenoyl)-sn-glycero-3-phosphoethanolamine + H2O = N-(5Z,8Z,11Z,14Z-eicosatetraenoyl)-ethanolamine + 1-(9Z-octadecenoyl)-sn-glycero-3-phosphate + H(+). Its activity is regulated as follows. Activated by divalent cations. Activated by bile acids. In terms of biological role, D-type phospholipase that hydrolyzes N-acyl-phosphatidylethanolamines (NAPEs) to produce bioactive N-acylethanolamines/fatty acid ethanolamides (NAEs/FAEs) and phosphatidic acid. Cleaves the terminal phosphodiester bond of diacyl- and alkenylacyl-NAPEs, primarily playing a role in the generation of long-chain saturated and monounsaturated NAEs in the brain. May control NAPE homeostasis in dopaminergic neuron membranes and regulate neuron survival, partly through RAC1 activation. As a regulator of lipid metabolism in the adipose tissue, mediates the crosstalk between adipocytes, gut microbiota and immune cells to control body temperature and weight. In particular, regulates energy homeostasis by promoting cold-induced brown or beige adipocyte differentiation program to generate heat from fatty acids and glucose. Has limited D-type phospholipase activity toward N-acyl lyso-NAPEs. This is N-acyl-phosphatidylethanolamine-hydrolyzing phospholipase D (NAPEPLD) from Bos taurus (Bovine).